The primary structure comprises 156 residues: MIQSQINRNIRLDLADAILLSKAKKDLSFAEIADGTGLAEAFVTEALLGQQALPADAARLVGAKLDLDEDSILLLQMIPLRGCIDDRIPTDPTMYRFYEMLQVYGTTLKALVHEKFGDGIISAINFKLDVKKVADPEGGECAVITLDGKYLPTKPF.

Catalysis depends on residues arginine 96, glutamate 99, and serine 122.

Belongs to the cyanase family.

The catalysed reaction is cyanate + hydrogencarbonate + 3 H(+) = NH4(+) + 2 CO2. Its function is as follows. Catalyzes the reaction of cyanate with bicarbonate to produce ammonia and carbon dioxide. In Escherichia coli (strain ATCC 8739 / DSM 1576 / NBRC 3972 / NCIMB 8545 / WDCM 00012 / Crooks), this protein is Cyanate hydratase.